We begin with the raw amino-acid sequence, 27 residues long: MSKGYVWVVDDDSSIRWVMEKTSPLPT.

Post-translationally, phosphorylated and dephosphorylated by NtrB.

Its subcellular location is the cytoplasm. Functionally, member of the two-component regulatory system NtrB/NtrC, which controls expression of the nitrogen-regulated (ntr) genes in response to nitrogen limitation. Phosphorylated NtrC binds directly to DNA and stimulates the formation of open promoter-sigma54-RNA polymerase complexes. The sequence is that of DNA-binding transcriptional regulator NtrC (ntrC) from Vibrio alginolyticus.